The primary structure comprises 442 residues: DMATS-type prenyltransferase mfmD (442 aa).

Belongs to the tryptophan dimethylallyltransferase family.

It participates in secondary metabolite biosynthesis; terpenoid biosynthesis. Functionally, prenyltransferase; part of the gene cluster that mediates the biosynthesis of the phthalide-terpenoid hybrid 11'-O-desmethylfendlerol. Within the pathway, mfmD is responsible for farnesylation of the cyclopolic acid intermediate via an O-prenylation reaction. The biosynthesis of 11'-O-desmethylfendlerol begins with the NR-PKS mfmB that forms 3,5-dimethylorsellinic acid (DMOA), which is then transformed into the phthalide 5,7-dihydroxy-4-(hydroxymethyl)-6-methylphthalide by the cytochrome P450 monooxygenase mfmA and the hydrolase mfmC. Subsequently, the methyltransferase mfmE catalyzes 7-O-methylation to yield 5-hydroxy-4-(hydroxymethyl)-7-methoxy-6-methylphthalide, which undergoes C-3 hydroxylation by the cytochrome P450 monooxygenase mfmF. The resultant cyclopolic acid (2,5-dihydroxy-4-(hydroxymethyl)-7-methoxy-6-methylphthalide) is then farnesylated by the DMATS-type prenyltransferase mfmD to afford 5-O-farnesylcyclopolic acid. Finally, the Pyr4-family terpene cyclase mfmH cyclizes the farnesyl moiety of 5-O-farnesylcyclopolic acid into a drimane-like structure, thus completing the biosynthesis of 11'-O-desmethylfendlerol. The protein is DMATS-type prenyltransferase mfmD of Annulohypoxylon moriforme (Filamentous fungus).